The primary structure comprises 252 residues: 4-hydroxy-tetrahydrodipicolinate reductase (252 aa).

NAD(+) contacts are provided by residues glycine 8–methionine 13, cysteine 84–threonine 86, and serine 108–methionine 111. Histidine 141 serves as the catalytic Proton donor/acceptor. Histidine 142 contacts (S)-2,3,4,5-tetrahydrodipicolinate. Lysine 145 (proton donor) is an active-site residue. Glycine 151 to threonine 152 serves as a coordination point for (S)-2,3,4,5-tetrahydrodipicolinate.

This sequence belongs to the DapB family.

It is found in the cytoplasm. It catalyses the reaction (S)-2,3,4,5-tetrahydrodipicolinate + NAD(+) + H2O = (2S,4S)-4-hydroxy-2,3,4,5-tetrahydrodipicolinate + NADH + H(+). The enzyme catalyses (S)-2,3,4,5-tetrahydrodipicolinate + NADP(+) + H2O = (2S,4S)-4-hydroxy-2,3,4,5-tetrahydrodipicolinate + NADPH + H(+). The protein operates within amino-acid biosynthesis; L-lysine biosynthesis via DAP pathway; (S)-tetrahydrodipicolinate from L-aspartate: step 4/4. Catalyzes the conversion of 4-hydroxy-tetrahydrodipicolinate (HTPA) to tetrahydrodipicolinate. This chain is 4-hydroxy-tetrahydrodipicolinate reductase, found in Clostridium botulinum (strain Eklund 17B / Type B).